The sequence spans 72 residues: MSYQQQQCKQPCQPPPVCPTPKCPEPCPPPKCPEPCPPPKCPQPCPPQQCQQKYPPVTPSPPCQPKYPPKSK.

The segment covering 1–11 has biased composition (low complexity); that stretch reads MSYQQQQCKQP. Residues 1–20 form a disordered region; that stretch reads MSYQQQQCKQPCQPPPVCPT. 3 consecutive repeat copies span residues 21–29, 30–38, and 39–47. Positions 21–47 are 3 X 9 AA tandem repeats of P-K-C-P-[EQ]-P-C-P-P; sequence PKCPEPCPPPKCPEPCPPPKCPQPCPP. Positions 42–72 are disordered; sequence PQPCPPQQCQQKYPPVTPSPPCQPKYPPKSK. Positions 56 to 72 are enriched in pro residues; that stretch reads PVTPSPPCQPKYPPKSK.

Belongs to the cornifin (SPRR) family. As to expression, suprabasal layers of squamous-differentiated tissues such as epidermis, esophagus, tongue and trachea.

The protein resides in the cytoplasm. Its function is as follows. Cross-linked envelope protein of keratinocytes. It is a keratinocyte protein that first appears in the cell cytosol, but ultimately becomes cross-linked to membrane proteins by transglutaminase. All that results in the formation of an insoluble envelope beneath the plasma membrane. The chain is Small proline-rich protein 2B (SPRR2B) from Homo sapiens (Human).